The primary structure comprises 132 residues: Insulin-like 3 (132 aa).

The N-terminal stretch at 1 to 21 (MDRRPLTWALVLLGPALAIAL) is a signal peptide. Q27 carries the post-translational modification Pyrrolidone carboxylic acid. 3 disulfide bridges follow: C34–C117, C46–C130, and C116–C121. Positions 67-104 (LLRWLEGQHLLHGLMASGDPVLVLAPQPLPQASRHHHH) are cleaved as a propeptide — c peptide like.

It belongs to the insulin family. Heterodimer of a B chain and an A chain linked by two disulfide bonds. 20% of B chains include an extra N-terminal pentapeptide. Expressed exclusively in Leydig cells of the testis.

The protein resides in the secreted. Seems to play a role in testicular function. May be a trophic hormone with a role in testicular descent in fetal life. Is a ligand for LGR8 receptor. This is Insulin-like 3 (INSL3) from Bos taurus (Bovine).